We begin with the raw amino-acid sequence, 293 residues long: Elongation factor Ts (293 aa).

An involved in Mg(2+) ion dislocation from EF-Tu region spans residues 80 to 83; it reads TDFV.

The protein belongs to the EF-Ts family.

It is found in the cytoplasm. Associates with the EF-Tu.GDP complex and induces the exchange of GDP to GTP. It remains bound to the aminoacyl-tRNA.EF-Tu.GTP complex up to the GTP hydrolysis stage on the ribosome. The protein is Elongation factor Ts of Burkholderia pseudomallei (strain 1106a).